A 103-amino-acid polypeptide reads, in one-letter code: Co-chaperonin GroES (103 aa).

Belongs to the GroES chaperonin family. In terms of assembly, heptamer of 7 subunits arranged in a ring. Interacts with the chaperonin GroEL.

The protein resides in the cytoplasm. Together with the chaperonin GroEL, plays an essential role in assisting protein folding. The GroEL-GroES system forms a nano-cage that allows encapsulation of the non-native substrate proteins and provides a physical environment optimized to promote and accelerate protein folding. GroES binds to the apical surface of the GroEL ring, thereby capping the opening of the GroEL channel. This is Co-chaperonin GroES from Synechococcus sp. (strain JA-2-3B'a(2-13)) (Cyanobacteria bacterium Yellowstone B-Prime).